The sequence spans 336 residues: Putative cysteine synthase (336 aa).

Lysine 41 carries the N6-(pyridoxal phosphate)lysine modification. Pyridoxal 5'-phosphate-binding positions include asparagine 71, glycine 179–serine 183, and serine 269.

It belongs to the cysteine synthase/cystathionine beta-synthase family. Requires pyridoxal 5'-phosphate as cofactor.

It carries out the reaction O-acetyl-L-serine + hydrogen sulfide = L-cysteine + acetate. Its function is as follows. As it is highly similar to bacterial and plant cysteine synthases, it is possible that it catalyzes a related reaction. The protein is Putative cysteine synthase of Sinorhizobium fredii (strain NBRC 101917 / NGR234).